Consider the following 300-residue polypeptide: 4-hydroxy-tetrahydrodipicolinate synthase (300 aa).

Threonine 55 is a pyruvate binding site. The active-site Proton donor/acceptor is the tyrosine 143. The active-site Schiff-base intermediate with substrate is lysine 171. Isoleucine 211 serves as a coordination point for pyruvate.

This sequence belongs to the DapA family. Homotetramer; dimer of dimers.

The protein resides in the cytoplasm. The enzyme catalyses L-aspartate 4-semialdehyde + pyruvate = (2S,4S)-4-hydroxy-2,3,4,5-tetrahydrodipicolinate + H2O + H(+). The protein operates within amino-acid biosynthesis; L-lysine biosynthesis via DAP pathway; (S)-tetrahydrodipicolinate from L-aspartate: step 3/4. Functionally, catalyzes the condensation of (S)-aspartate-beta-semialdehyde [(S)-ASA] and pyruvate to 4-hydroxy-tetrahydrodipicolinate (HTPA). This is 4-hydroxy-tetrahydrodipicolinate synthase from Mycolicibacterium paratuberculosis (strain ATCC BAA-968 / K-10) (Mycobacterium paratuberculosis).